The primary structure comprises 354 residues: MSKYWSNITKDIEPYVCGEQPKNKKIIKLNTNENPYPPSPKVLQAIENAAKDDLRLYPDPNCDTLRKTIANYYNLSKEEVFIGNGSDEVLSLSFLTFFNPEETVVFSDISYSFYPVYANLYKLDYELAKLREDFSIDIEDFKNTKGGAIITNPNAPTGLYLSLDSIKQILEDNINKVVMVDEAYIDFGGESSVSLIKDYPNLLVIQTLSKSRSLAGMRIGFALGKKELIEGLNRIKNSFNSYTIDRISSLAAIEAIKDEEYFKECTLKVIKTRNWTINELGKIGFKIIPSKANFIFITHDTYQAEDILIKLRDENVLVRYFNKDRISNYLRVSIGSKEEMEIFMDKIKKIINKL.

Residue K210 is modified to N6-(pyridoxal phosphate)lysine.

Belongs to the class-II pyridoxal-phosphate-dependent aminotransferase family. Histidinol-phosphate aminotransferase subfamily. Homodimer. The cofactor is pyridoxal 5'-phosphate.

The catalysed reaction is L-histidinol phosphate + 2-oxoglutarate = 3-(imidazol-4-yl)-2-oxopropyl phosphate + L-glutamate. The protein operates within amino-acid biosynthesis; L-histidine biosynthesis; L-histidine from 5-phospho-alpha-D-ribose 1-diphosphate: step 7/9. The protein is Histidinol-phosphate aminotransferase of Clostridium botulinum (strain ATCC 19397 / Type A).